Consider the following 273-residue polypeptide: Ribosomal RNA small subunit methyltransferase A (273 aa).

S-adenosyl-L-methionine contacts are provided by Asn19, Leu21, Gly46, Glu67, Asp92, and Asn113.

This sequence belongs to the class I-like SAM-binding methyltransferase superfamily. rRNA adenine N(6)-methyltransferase family. RsmA subfamily.

Its subcellular location is the cytoplasm. It catalyses the reaction adenosine(1518)/adenosine(1519) in 16S rRNA + 4 S-adenosyl-L-methionine = N(6)-dimethyladenosine(1518)/N(6)-dimethyladenosine(1519) in 16S rRNA + 4 S-adenosyl-L-homocysteine + 4 H(+). In terms of biological role, specifically dimethylates two adjacent adenosines (A1518 and A1519) in the loop of a conserved hairpin near the 3'-end of 16S rRNA in the 30S particle. May play a critical role in biogenesis of 30S subunits. This Hahella chejuensis (strain KCTC 2396) protein is Ribosomal RNA small subunit methyltransferase A.